Reading from the N-terminus, the 591-residue chain is Paxillin (591 aa).

An N-acetylmethionine modification is found at methionine 1. Residues 3–15 (DLDALLADLESTT) carry the LD motif 1 motif. The tract at residues 17 to 139 (HISKRPVFLS…SPTVMSSSLG (123 aa)) is disordered. Tyrosine 31 carries the phosphotyrosine; by PTK6 modification. The span at 45-54 (VPPPVPPPPS) shows a compositional bias: pro residues. Serine 83 carries the post-translational modification Phosphoserine. Residue tyrosine 88 is modified to Phosphotyrosine. Residues 89-99 (SSSAKNSSASN) are compositionally biased toward low complexity. Serine 106 is modified (phosphoserine). Phosphotyrosine; by PTK6 is present on tyrosine 118. Phosphoserine occurs at positions 119, 126, and 130. Positions 121–137 (PNKQKSAEPSPTVMSSS) are enriched in polar residues. Threonine 132 carries the post-translational modification Phosphothreonine. 3 positions are modified to phosphoserine: serine 137, serine 140, and serine 143. An LD motif 2 motif is present at residues 144–156 (ELDRLLLELNAVQ). A disordered region spans residues 156 to 261 (QHSPPGFPAD…QQQTRISASS (106 aa)). Position 181 is a phosphotyrosine (tyrosine 181). Residues 216–228 (SVESLLDELESSV) carry the LD motif 3 motif. Position 230 is a phosphoserine (serine 230). Residues 236–261 (TVNQGEMSSPQRVTSSQQQTRISASS) are compositionally biased toward polar residues. The residue at position 244 (serine 244) is a Phosphoserine; by CDK5. Residues serine 250, serine 258, serine 261, serine 272, serine 303, serine 322, serine 332, and serine 340 each carry the phosphoserine modification. The required for binding to PARVA and ILK stretch occupies residues 262 to 315 (ATRELDELMASLSDFKMQGLEQRVDGERPWAAGWPPSSRQSSPEGQDEGGFMAQ). The LD motif 4 signature appears at 265–276 (ELDELMASLSDF). Positions 289–338 (RPWAAGWPPSSRQSSPEGQDEGGFMAQGKTGSSSPPGGLSKPGSQLDSML) are disordered. Low complexity predominate over residues 315–334 (QGKTGSSSPPGGLSKPGSQL). The LD motif 5 motif lies at 333 to 345 (QLDSMLGSLQSDL). LIM zinc-binding domains lie at 356-415 (GVCG…LFSP), 416-473 (RCYY…DMFA), 474-533 (PKCG…RRGS), and 534-591 (LCSG…KLFC). Position 533 is a phosphoserine (serine 533).

The protein belongs to the paxillin family. In terms of assembly, interacts in vitro with VCL/vinculin as well as to the SH3 domain of SRC and, when tyrosine phosphorylated, to the SH2 domain of CRK. Interacts with GIT1. Interacts with NUDT16L1/SDOS. Interacts with PTK2/FAK1. Interacts with PTK2B/PYK2. Interacts with ASAP2. Interacts with unphosphorylated ITGA4. Interacts with RNF5. Interacts with PDCD10. Interacts with NEK3, the interaction is prolactin-dependent. Interacts with PTK6. Interacts with TGFB1I1. Interacts with SORBS1. Interacts with PARVB. Interacts (via LD motif 4) with PARVA/PARVIN. Interacts (via LD motif 4) with ILK. Interacts (via cytoplasmic domain) with CEACAM1; the interaction is phosphotyrosyl-dependent. Interacts with LIMA1; this complex stabilizes actin dynamics. Interacts with CD36 (via C-terminus). Interacts with TRIM15. Interacts with PAK4; PAK4 acts as a scaffold to suppport PAXI phosphorylation at Ser-272. In terms of processing, phosphorylated by MAPK1/ERK2. Phosphorylated on tyrosine residues during integrin-mediated cell adhesion, embryonic development, fibroblast transformation and following stimulation of cells by mitogens. Phosphorylation at Ser-244 by CDK5 reduces its interaction with PTK2/FAK1 in matrix-cell focal adhesions (MCFA) during oligodendrocytes (OLs) differentiation. Phosphorylation at Tyr-31 and Tyr-118 by PTK6 promote the activation of RAC1 via CRK/CrKII, thereby promoting migration and invasion. Phosphorylation at Ser-250 by SLK is required for PXN redistribution and cell motility. Phosphorylation at Ser-272 promotes focal adhesion disassembly during cell migration.

The protein localises to the cytoplasm. It localises to the cytoskeleton. The protein resides in the cell junction. It is found in the focal adhesion. Its subcellular location is the cell cortex. In terms of biological role, cytoskeletal protein involved in actin-membrane attachment at sites of cell adhesion to the extracellular matrix (focal adhesion). Recruits other proteins such as TRIM15 to focal adhesion. This is Paxillin from Mus musculus (Mouse).